The chain runs to 265 residues: 4-hydroxy-tetrahydrodipicolinate reductase (265 aa).

Residue 16–21 (GANGKM) coordinates NAD(+). Arg-43 serves as a coordination point for NADP(+). NAD(+) is bound by residues 106–108 (GTT) and 130–133 (SENF). His-164 serves as the catalytic Proton donor/acceptor. A (S)-2,3,4,5-tetrahydrodipicolinate-binding site is contributed by His-165. Lys-168 (proton donor) is an active-site residue. 174–175 (AT) contacts (S)-2,3,4,5-tetrahydrodipicolinate.

Belongs to the DapB family. As to quaternary structure, homotetramer.

Its subcellular location is the cytoplasm. The enzyme catalyses (S)-2,3,4,5-tetrahydrodipicolinate + NAD(+) + H2O = (2S,4S)-4-hydroxy-2,3,4,5-tetrahydrodipicolinate + NADH + H(+). It carries out the reaction (S)-2,3,4,5-tetrahydrodipicolinate + NADP(+) + H2O = (2S,4S)-4-hydroxy-2,3,4,5-tetrahydrodipicolinate + NADPH + H(+). It functions in the pathway amino-acid biosynthesis; L-lysine biosynthesis via DAP pathway; (S)-tetrahydrodipicolinate from L-aspartate: step 4/4. Its function is as follows. Catalyzes the conversion of 4-hydroxy-tetrahydrodipicolinate (HTPA) to tetrahydrodipicolinate. The polypeptide is 4-hydroxy-tetrahydrodipicolinate reductase (Wigglesworthia glossinidia brevipalpis).